Consider the following 556-residue polypeptide: CDP-diacylglycerol--glycerol-3-phosphate 3-phosphatidyltransferase, mitochondrial (556 aa).

The transit peptide at 1–28 (MAAAAAAAAGPVFWRRLLGLLPGRPGLA) directs the protein to the mitochondrion. Ser-49 carries the post-translational modification Phosphoserine. 124–131 (ASLYLGIG) contacts ATP. 2 consecutive PLD phosphodiesterase domains span residues 215 to 241 (TIGLQHIKVYLFDNNVILSGANLSDSY) and 419 to 457 (FGAKGVAGAIPAAYVHIERQFYSEVCSLGQQERVQLQEY). Catalysis depends on residues His-220, Lys-222, and Asp-227.

Belongs to the CDP-alcohol phosphatidyltransferase class-II family.

Its subcellular location is the mitochondrion. The catalysed reaction is a CDP-1,2-diacyl-sn-glycerol + sn-glycerol 3-phosphate = a 1,2-diacyl-sn-glycero-3-phospho-(1'-sn-glycero-3'-phosphate) + CMP + H(+). The protein operates within phospholipid metabolism; phosphatidylglycerol biosynthesis; phosphatidylglycerol from CDP-diacylglycerol: step 1/2. Its activity is regulated as follows. Activated by calcium and magnesium and inhibited by other bivalent cations. In terms of biological role, functions in the biosynthesis of the anionic phospholipids phosphatidylglycerol and cardiolipin. The protein is CDP-diacylglycerol--glycerol-3-phosphate 3-phosphatidyltransferase, mitochondrial (PGS1) of Bos taurus (Bovine).